The primary structure comprises 210 residues: MVKYPSGSLAAFRKPINKKENEIRHTYTHRKGVNFSDRGMTLEQQINESNKYYLNEEIAVVHKKPTPIQIVKVDYPKRSKAVIREAYFRQASTTDYNGVYKGYYLDFEAKETRNKTNFPLKNFHEHQIFHLSACLKQKGFCFTIIRFASLERYFVTPASFVINAWREKDKSSMTLKEIEDNSYEIKSGFRPTLPYLKAVDNFIADREREL.

Mg(2+) contacts are provided by threonine 93, aspartate 95, glutamate 108, and glutamine 127.

This sequence belongs to the RecU family. Requires Mg(2+) as cofactor.

It localises to the cytoplasm. The enzyme catalyses Endonucleolytic cleavage at a junction such as a reciprocal single-stranded crossover between two homologous DNA duplexes (Holliday junction).. Its function is as follows. Endonuclease that resolves Holliday junction intermediates in genetic recombination. Cleaves mobile four-strand junctions by introducing symmetrical nicks in paired strands. Promotes annealing of linear ssDNA with homologous dsDNA. Required for DNA repair, homologous recombination and chromosome segregation. The polypeptide is Holliday junction resolvase RecU (Lactobacillus helveticus (strain DPC 4571)).